Reading from the N-terminus, the 207-residue chain is Superoxide dismutase [Mn] (207 aa).

Residues histidine 28, histidine 76, aspartate 160, and histidine 164 each contribute to the Mn(2+) site.

It belongs to the iron/manganese superoxide dismutase family. Mn(2+) is required as a cofactor.

The catalysed reaction is 2 superoxide + 2 H(+) = H2O2 + O2. Destroys superoxide anion radicals which are normally produced within the cells and which are toxic to biological systems. This is Superoxide dismutase [Mn] (sodA) from Mycobacterium leprae (strain TN).